We begin with the raw amino-acid sequence, 276 residues long: Elongation factor Ts (276 aa).

Residues 80–83 (TDFV) form an involved in Mg(2+) ion dislocation from EF-Tu region.

The protein belongs to the EF-Ts family.

It is found in the cytoplasm. Functionally, associates with the EF-Tu.GDP complex and induces the exchange of GDP to GTP. It remains bound to the aminoacyl-tRNA.EF-Tu.GTP complex up to the GTP hydrolysis stage on the ribosome. In Acidothermus cellulolyticus (strain ATCC 43068 / DSM 8971 / 11B), this protein is Elongation factor Ts.